Here is a 142-residue protein sequence, read N- to C-terminus: Large ribosomal subunit protein uL13 (142 aa).

It belongs to the universal ribosomal protein uL13 family. In terms of assembly, part of the 50S ribosomal subunit.

Its function is as follows. This protein is one of the early assembly proteins of the 50S ribosomal subunit, although it is not seen to bind rRNA by itself. It is important during the early stages of 50S assembly. In Idiomarina loihiensis (strain ATCC BAA-735 / DSM 15497 / L2-TR), this protein is Large ribosomal subunit protein uL13.